Here is a 199-residue protein sequence, read N- to C-terminus: Large ribosomal subunit protein bL25 (199 aa).

Belongs to the bacterial ribosomal protein bL25 family. CTC subfamily. Part of the 50S ribosomal subunit; part of the 5S rRNA/L5/L18/L25 subcomplex. Contacts the 5S rRNA. Binds to the 5S rRNA independently of L5 and L18.

In terms of biological role, this is one of the proteins that binds to the 5S RNA in the ribosome where it forms part of the central protuberance. The protein is Large ribosomal subunit protein bL25 of Chlorobaculum tepidum (strain ATCC 49652 / DSM 12025 / NBRC 103806 / TLS) (Chlorobium tepidum).